Reading from the N-terminus, the 510-residue chain is ATP synthase subunit alpha (510 aa).

Residue 169–176 (GDRQTGKT) participates in ATP binding.

This sequence belongs to the ATPase alpha/beta chains family. F-type ATPases have 2 components, CF(1) - the catalytic core - and CF(0) - the membrane proton channel. CF(1) has five subunits: alpha(3), beta(3), gamma(1), delta(1), epsilon(1). CF(0) has three main subunits: a(1), b(2) and c(9-12). The alpha and beta chains form an alternating ring which encloses part of the gamma chain. CF(1) is attached to CF(0) by a central stalk formed by the gamma and epsilon chains, while a peripheral stalk is formed by the delta and b chains.

It is found in the cell inner membrane. It catalyses the reaction ATP + H2O + 4 H(+)(in) = ADP + phosphate + 5 H(+)(out). Functionally, produces ATP from ADP in the presence of a proton gradient across the membrane. The alpha chain is a regulatory subunit. The chain is ATP synthase subunit alpha from Rickettsia massiliae (strain Mtu5).